Here is a 995-residue protein sequence, read N- to C-terminus: Protein translocase subunit SecA (995 aa).

Residues Gln86, 104 to 108, and Asp535 contribute to the ATP site; that span reads GEGKT. The segment at 883 to 911 is disordered; it reads AQTVSSDGNGEVVRKPQRRSTPQIGRNEL. Residues Cys912, Cys914, Cys923, and His924 each coordinate Zn(2+). The disordered stretch occupies residues 939–995; that stretch reads PSAPPASKALKSTPATQTAVAEEAAKIQAAINSGKLPPTQTTPRGRQAPSVPRGKKR. Over residues 957 to 969 the composition is skewed to low complexity; the sequence is AVAEEAAKIQAAI.

Belongs to the SecA family. As to quaternary structure, monomer and homodimer. Part of the essential Sec protein translocation apparatus which comprises SecA, SecYEG and auxiliary proteins SecDF. Other proteins may also be involved. It depends on Zn(2+) as a cofactor.

It localises to the cell membrane. It is found in the cytoplasm. It catalyses the reaction ATP + H2O + cellular proteinSide 1 = ADP + phosphate + cellular proteinSide 2.. Functionally, part of the Sec protein translocase complex. Interacts with the SecYEG preprotein conducting channel. Has a central role in coupling the hydrolysis of ATP to the transfer of proteins into and across the cell membrane, serving as an ATP-driven molecular motor driving the stepwise translocation of polypeptide chains across the membrane. The chain is Protein translocase subunit SecA from Chloroflexus aurantiacus (strain ATCC 29366 / DSM 635 / J-10-fl).